Reading from the N-terminus, the 504-residue chain is Xylose import ATP-binding protein XylG (504 aa).

ABC transporter domains are found at residues 6-243 (LEMQ…VGRE) and 262-504 (VRNF…TGGK). An ATP-binding site is contributed by 38–45 (GENGAGKS).

Belongs to the ABC transporter superfamily. Xylose importer (TC 3.A.1.2.4) family. The complex is composed of two ATP-binding proteins (XylG), two transmembrane proteins (XylH) and a solute-binding protein (XylF).

Its subcellular location is the cell membrane. The enzyme catalyses D-xylose(out) + ATP + H2O = D-xylose(in) + ADP + phosphate + H(+). In terms of biological role, part of the ABC transporter complex XylFGH involved in xylose import. Responsible for energy coupling to the transport system. This Moorella thermoacetica (strain ATCC 39073 / JCM 9320) protein is Xylose import ATP-binding protein XylG.